Consider the following 468-residue polypeptide: Putative amidase AmiC (468 aa).

Catalysis depends on charge relay system residues K80 and S155. S179 functions as the Acyl-ester intermediate in the catalytic mechanism.

The protein belongs to the amidase family.

It carries out the reaction a monocarboxylic acid amide + H2O = a monocarboxylate + NH4(+). The sequence is that of Putative amidase AmiC (amiC) from Mycobacterium leprae (strain TN).